The chain runs to 377 residues: Succinyl-diaminopimelate desuccinylase (377 aa).

His-67 serves as a coordination point for Zn(2+). Asp-69 is an active-site residue. Residue Asp-100 participates in Zn(2+) binding. The active-site Proton acceptor is Glu-134. Zn(2+) is bound by residues Glu-135, Glu-163, and His-349.

This sequence belongs to the peptidase M20A family. DapE subfamily. In terms of assembly, homodimer. Requires Zn(2+) as cofactor. It depends on Co(2+) as a cofactor.

It catalyses the reaction N-succinyl-(2S,6S)-2,6-diaminopimelate + H2O = (2S,6S)-2,6-diaminopimelate + succinate. It participates in amino-acid biosynthesis; L-lysine biosynthesis via DAP pathway; LL-2,6-diaminopimelate from (S)-tetrahydrodipicolinate (succinylase route): step 3/3. Its function is as follows. Catalyzes the hydrolysis of N-succinyl-L,L-diaminopimelic acid (SDAP), forming succinate and LL-2,6-diaminopimelate (DAP), an intermediate involved in the bacterial biosynthesis of lysine and meso-diaminopimelic acid, an essential component of bacterial cell walls. The sequence is that of Succinyl-diaminopimelate desuccinylase from Buchnera aphidicola subsp. Baizongia pistaciae (strain Bp).